A 221-amino-acid chain; its full sequence is Serine/arginine-rich splicing factor 2 (221 aa).

The residue at position 2 (S2) is an N-acetylserine. Residue S2 is modified to Phosphoserine. In terms of domain architecture, RRM spans 14–92 (TSLKVDNLTY…RELRVQMARY (79 aa)). 2 positions are modified to phosphothreonine: T22 and T25. The residue at position 26 (S26) is a Phosphoserine. Residue K52 is modified to N6-acetyllysine. A disordered region spans residues 92–221 (YGRPPDSHHS…SPEEEGAVSS (130 aa)). 2 stretches are compositionally biased toward basic residues: residues 117-171 (RRSR…RSKS) and 179-189 (SRSRSRSRSRS). 7 positions are modified to phosphoserine: S189, S191, S204, S206, S208, S212, and S220.

The protein belongs to the splicing factor SR family. In terms of assembly, in vitro, self-associates and binds SRSF1/SFRS1 (ASF/SF2), SNRNP70 and U2AF1 but not U2AF2. Binds SREK1/SFRS12. Interacts with CCNL1 and CCNL2. Interacts with SCAF11. Interacts with ZRSR2/U2AF1-RS2. Interacts with CCDC55 (via C-terminus). Interacts with BRDT. Extensively phosphorylated on serine residues in the RS domain. Phosphorylated by SRPK2 and this causes its redistribution from the nuclear speckle to nucleoplasm and controls cell fate decision in response to cisplatin treatment. KAT5/TIP60 inhibits its phosphorylation by preventing SRPK2 nuclear translocation. Post-translationally, acetylation on Lys-52 by KAT5/TIP60 promotes its proteasomal degradation. This effect is counterbalanced by HDAC6, which positively controls SRSF2 protein level by deacetylating it and preventing its proteasomal degradation.

The protein resides in the nucleus. It is found in the nucleoplasm. The protein localises to the nucleus speckle. Its function is as follows. Necessary for the splicing of pre-mRNA. It is required for formation of the earliest ATP-dependent splicing complex and interacts with spliceosomal components bound to both the 5'- and 3'-splice sites during spliceosome assembly. It also is required for ATP-dependent interactions of both U1 and U2 snRNPs with pre-mRNA. Interacts with other spliceosomal components, via the RS domains, to form a bridge between the 5'- and 3'-splice site binding components, U1 snRNP and U2AF. Binds to purine-rich RNA sequences, either 5'-AGSAGAGTA-3' (S=C or G) or 5'-GTTCGAGTA-3'. Can bind to beta-globin mRNA and commit it to the splicing pathway. The phosphorylated form (by SRPK2) is required for cellular apoptosis in response to cisplatin treatment. This chain is Serine/arginine-rich splicing factor 2 (SRSF2), found in Sus scrofa (Pig).